The sequence spans 423 residues: Imidazolonepropionase (423 aa).

Fe(3+) is bound by residues His78 and His80. Positions 78 and 80 each coordinate Zn(2+). Positions 87, 150, and 183 each coordinate 4-imidazolone-5-propanoate. Tyr150 contacts N-formimidoyl-L-glutamate. His247 serves as a coordination point for Fe(3+). Zn(2+) is bound at residue His247. 4-imidazolone-5-propanoate is bound at residue Glu250. Position 322 (Asp322) interacts with Fe(3+). Asp322 contributes to the Zn(2+) binding site. Residues Asn324 and Gly326 each coordinate N-formimidoyl-L-glutamate. Ser327 is a 4-imidazolone-5-propanoate binding site.

This sequence belongs to the metallo-dependent hydrolases superfamily. HutI family. Requires Zn(2+) as cofactor. The cofactor is Fe(3+).

The protein resides in the cytoplasm. The catalysed reaction is 4-imidazolone-5-propanoate + H2O = N-formimidoyl-L-glutamate. The protein operates within amino-acid degradation; L-histidine degradation into L-glutamate; N-formimidoyl-L-glutamate from L-histidine: step 3/3. Catalyzes the hydrolytic cleavage of the carbon-nitrogen bond in imidazolone-5-propanoate to yield N-formimidoyl-L-glutamate. It is the third step in the universal histidine degradation pathway. The chain is Imidazolonepropionase from Bacillus cereus (strain B4264).